Here is a 1068-residue protein sequence, read N- to C-terminus: Putative protein TIC 214 N-terminal part (1068 aa).

A run of 6 helical transmembrane segments spans residues 11-31 (VLWV…LFGI), 68-88 (ITGQ…VLLI), 92-112 (LLTL…KDLI), 131-151 (IFFD…SPVL), 166-186 (FIFL…FVSL), and 213-233 (FSII…VPFI).

The protein belongs to the TIC214 family. Part of the Tic complex.

Its subcellular location is the plastid. It localises to the chloroplast inner membrane. In terms of biological role, involved in protein precursor import into chloroplasts. May be part of an intermediate translocation complex acting as a protein-conducting channel at the inner envelope. This Marchantia polymorpha (Common liverwort) protein is Putative protein TIC 214 N-terminal part.